The chain runs to 178 residues: Heavy metal-associated isoprenylated plant protein 30 (178 aa).

The HMA domain maps to 45–108 (LQTIDLKVRM…AVRRAGKRAE (64 aa)). Positions 56 and 59 each coordinate a metal cation. The residue at position 175 (Cys-175) is a Cysteine methyl ester. Residue Cys-175 is the site of S-farnesyl cysteine attachment. Positions 176–178 (SLM) are cleaved as a propeptide — removed in mature form.

Belongs to the HIPP family. As to quaternary structure, interacts with ZHD3/HB21, ZHD11/HB29 and ZHD8/HB30.

Its function is as follows. Heavy-metal-binding protein. The polypeptide is Heavy metal-associated isoprenylated plant protein 30 (Arabidopsis thaliana (Mouse-ear cress)).